A 187-amino-acid chain; its full sequence is Ribosome-recycling factor (187 aa).

This sequence belongs to the RRF family.

The protein resides in the cytoplasm. Responsible for the release of ribosomes from messenger RNA at the termination of protein biosynthesis. May increase the efficiency of translation by recycling ribosomes from one round of translation to another. This is Ribosome-recycling factor from Mycoplasmopsis pulmonis (strain UAB CTIP) (Mycoplasma pulmonis).